Here is a 496-residue protein sequence, read N- to C-terminus: ATP synthase subunit beta, chloroplastic (496 aa).

An ATP-binding site is contributed by 170–177; sequence GGAGVGKT.

The protein belongs to the ATPase alpha/beta chains family. As to quaternary structure, F-type ATPases have 2 components, CF(1) - the catalytic core - and CF(0) - the membrane proton channel. CF(1) has five subunits: alpha(3), beta(3), gamma(1), delta(1), epsilon(1). CF(0) has four main subunits: a(1), b(1), b'(1) and c(9-12).

The protein resides in the plastid. It localises to the chloroplast thylakoid membrane. It carries out the reaction ATP + H2O + 4 H(+)(in) = ADP + phosphate + 5 H(+)(out). Functionally, produces ATP from ADP in the presence of a proton gradient across the membrane. The catalytic sites are hosted primarily by the beta subunits. The sequence is that of ATP synthase subunit beta, chloroplastic from Dioscorea elephantipes (Elephant's foot yam).